A 141-amino-acid polypeptide reads, in one-letter code: Galactose-6-phosphate isomerase subunit LacA 1 (141 aa).

The protein belongs to the LacAB/RpiB family. In terms of assembly, heteromultimeric protein consisting of LacA and LacB.

The enzyme catalyses aldehydo-D-galactose 6-phosphate = keto-D-tagatose 6-phosphate. The protein operates within carbohydrate metabolism; D-galactose 6-phosphate degradation; D-tagatose 6-phosphate from D-galactose 6-phosphate: step 1/1. This Streptococcus agalactiae serotype III (strain NEM316) protein is Galactose-6-phosphate isomerase subunit LacA 1.